Reading from the N-terminus, the 109-residue chain is MFMFFINIIFINNFLNNYKTYIIYIYIYNKWNNYNKNYNYNYIMIMITMGLNITCEQTVMFNPYYYLLYYMYIKMLMLMLMLYYIMLYYIMLYYIMFMIMLYYMIYMTL.

It is found in the mitochondrion. This is an uncharacterized protein from Saccharomyces cerevisiae (strain ATCC 204508 / S288c) (Baker's yeast).